The chain runs to 204 residues: Small ribosomal subunit protein uS7 (204 aa).

Methionine 1 carries the post-translational modification N-acetylmethionine. At threonine 2 the chain carries N-acetylthreonine; in 40S ribosomal protein S5, N-terminally processed. Threonine 14 carries the post-translational modification Phosphothreonine. Lysine 47 carries the post-translational modification N6-acetyllysine; alternate. Lysine 47 is covalently cross-linked (Glycyl lysine isopeptide (Lys-Gly) (interchain with G-Cter in SUMO2); alternate). Serine 142 is modified (phosphoserine).

The protein belongs to the universal ribosomal protein uS7 family. As to quaternary structure, component of the small ribosomal subunit. Part of the small subunit (SSU) processome, composed of more than 70 proteins and the RNA chaperone small nucleolar RNA (snoRNA) U3.

The protein localises to the cytoplasm. It is found in the nucleus. It localises to the nucleolus. In terms of biological role, component of the small ribosomal subunit. The ribosome is a large ribonucleoprotein complex responsible for the synthesis of proteins in the cell. Part of the small subunit (SSU) processome, first precursor of the small eukaryotic ribosomal subunit. During the assembly of the SSU processome in the nucleolus, many ribosome biogenesis factors, an RNA chaperone and ribosomal proteins associate with the nascent pre-rRNA and work in concert to generate RNA folding, modifications, rearrangements and cleavage as well as targeted degradation of pre-ribosomal RNA by the RNA exosome. The chain is Small ribosomal subunit protein uS7 (Rps5) from Mus musculus (Mouse).